We begin with the raw amino-acid sequence, 732 residues long: Polyphosphate kinase (732 aa).

Residue N61 participates in ATP binding. Residues R417 and R447 each coordinate Mg(2+). The active-site Phosphohistidine intermediate is the H477. 3 residues coordinate ATP: Y510, R606, and H634. The interval 699–718 is disordered; it reads DGTYRQRQPAPGEAERGTHS.

This sequence belongs to the polyphosphate kinase 1 (PPK1) family. The cofactor is Mg(2+). In terms of processing, an intermediate of this reaction is the autophosphorylated ppk in which a phosphate is covalently linked to a histidine residue through a N-P bond.

The enzyme catalyses [phosphate](n) + ATP = [phosphate](n+1) + ADP. Its function is as follows. Catalyzes the reversible transfer of the terminal phosphate of ATP to form a long-chain polyphosphate (polyP). This chain is Polyphosphate kinase, found in Thermosynechococcus vestitus (strain NIES-2133 / IAM M-273 / BP-1).